The sequence spans 383 residues: Putative glutamate--cysteine ligase 2-2 (383 aa).

Residues 35-56 (RGDRDGAGGPPGGADPDGDLDG) form a disordered region.

This sequence belongs to the glutamate--cysteine ligase type 2 family. YbdK subfamily.

It carries out the reaction L-cysteine + L-glutamate + ATP = gamma-L-glutamyl-L-cysteine + ADP + phosphate + H(+). In terms of biological role, ATP-dependent carboxylate-amine ligase which exhibits weak glutamate--cysteine ligase activity. The sequence is that of Putative glutamate--cysteine ligase 2-2 from Frankia alni (strain DSM 45986 / CECT 9034 / ACN14a).